A 64-amino-acid polypeptide reads, in one-letter code: MGKTSGAKQATVVVAAMALGWLAIEIAFKPFLDKFRSSIDKSDPTKDPDDFDTAATATTSKEGL.

The Chloroplast intermembrane segment spans residues 1 to 11 (MGKTSGAKQAT). Residues 12–32 (VVVAAMALGWLAIEIAFKPFL) traverse the membrane as a helical segment. An AKR2A-binding sequence (ABS) required for chloroplast outer envelope membrane targeting motif is present at residues 29-35 (KPFLDKF). Residues 33 to 64 (DKFRSSIDKSDPTKDPDDFDTAATATTSKEGL) are Cytoplasmic-facing. Over residues 39 to 48 (IDKSDPTKDP) the composition is skewed to basic and acidic residues. The interval 39-64 (IDKSDPTKDPDDFDTAATATTSKEGL) is disordered. Low complexity predominate over residues 53–64 (TAATATTSKEGL).

As to quaternary structure, interacts with AKR2A. Confined to green tissues.

It localises to the plastid. The protein localises to the chloroplast outer membrane. The polypeptide is Outer envelope membrane protein 7 (Arabidopsis thaliana (Mouse-ear cress)).